Reading from the N-terminus, the 146-residue chain is Hemoglobin subunit beta (146 aa).

The region spanning 2 to 146 (QWSESERTII…VVSALGKQYH (145 aa)) is the Globin domain. 2 residues coordinate heme b: His-63 and His-92.

This sequence belongs to the globin family. As to quaternary structure, heterotetramer of two alpha chains and two beta chains. In terms of tissue distribution, red blood cells.

In terms of biological role, involved in oxygen transport from gills to the various peripheral tissues. The protein is Hemoglobin subunit beta (hbb) of Pogonophryne scotti (Saddleback plunderfish).